The primary structure comprises 265 residues: Ribosomal RNA small subunit methyltransferase A (265 aa).

Residues His-13, Leu-15, Gly-40, Glu-61, Asp-85, and Asn-103 each coordinate S-adenosyl-L-methionine.

Belongs to the class I-like SAM-binding methyltransferase superfamily. rRNA adenine N(6)-methyltransferase family. RsmA subfamily.

The protein localises to the cytoplasm. It catalyses the reaction adenosine(1518)/adenosine(1519) in 16S rRNA + 4 S-adenosyl-L-methionine = N(6)-dimethyladenosine(1518)/N(6)-dimethyladenosine(1519) in 16S rRNA + 4 S-adenosyl-L-homocysteine + 4 H(+). Its function is as follows. Specifically dimethylates two adjacent adenosines (A1518 and A1519) in the loop of a conserved hairpin near the 3'-end of 16S rRNA in the 30S particle. May play a critical role in biogenesis of 30S subunits. This chain is Ribosomal RNA small subunit methyltransferase A, found in Bordetella pertussis (strain Tohama I / ATCC BAA-589 / NCTC 13251).